The primary structure comprises 265 residues: Shikimate dehydrogenase (NADP(+)) (265 aa).

Residues 15-17 and Thr-62 contribute to the shikimate site; that span reads SLS. Catalysis depends on Lys-66, which acts as the Proton acceptor. Residues Asn-87 and Asp-102 each contribute to the shikimate site. Residues 125-129, 149-154, and Leu-209 contribute to the NADP(+) site; these read GAGGA and NRTLEK. Tyr-211 is a shikimate binding site. Gly-233 is a binding site for NADP(+).

Belongs to the shikimate dehydrogenase family. As to quaternary structure, homodimer.

It carries out the reaction shikimate + NADP(+) = 3-dehydroshikimate + NADPH + H(+). It functions in the pathway metabolic intermediate biosynthesis; chorismate biosynthesis; chorismate from D-erythrose 4-phosphate and phosphoenolpyruvate: step 4/7. In terms of biological role, involved in the biosynthesis of the chorismate, which leads to the biosynthesis of aromatic amino acids. Catalyzes the reversible NADPH linked reduction of 3-dehydroshikimate (DHSA) to yield shikimate (SA). In Legionella pneumophila (strain Corby), this protein is Shikimate dehydrogenase (NADP(+)).